The primary structure comprises 314 residues: Putative steroid dehydrogenase 1 (314 aa).

47 to 76 (ASWAVVTGATDGIGKSYSFELAKRGFNVYI) contacts NADP(+). Tyr-202 is an active-site residue.

It belongs to the short-chain dehydrogenases/reductases (SDR) family. 17-beta-HSD 3 subfamily.

This is Putative steroid dehydrogenase 1 (stdh-1) from Caenorhabditis elegans.